A 238-amino-acid polypeptide reads, in one-letter code: Lactate utilization protein A (238 aa).

This sequence belongs to the LutA/YkgE family.

Is involved in L-lactate degradation and allows cells to grow with lactate as the sole carbon source. The polypeptide is Lactate utilization protein A (Geobacillus sp. (strain WCH70)).